The chain runs to 27 residues: GKAFDDGAFTGIREINLSINKETAIGD.

Residues 1–27 form the Jacalin-type lectin domain; that stretch reads GKAFDDGAFTGIREINLSINKETAIGD.

Belongs to the jacalin lectin family. In terms of assembly, tetramer of four alpha chains associated with two or four beta chains. Post-translationally, N-glycosylated.

In terms of biological role, D-galactose-specific lectin, binds the T-antigen structure Gal-beta1,3-GalNAc (Thomsen-Friedenreich-antigen-specific lectin). Potent and selective stimulant of distinct T- and B-cell functions. Shows a unique ability to specifically recognize IgA-1 from human serum. The sequence is that of Agglutinin alpha chain from Artocarpus tonkinensis.